A 275-amino-acid chain; its full sequence is 4-hydroxy-3-methylbut-2-enyl diphosphate reductase (275 aa).

Cys12 contacts [4Fe-4S] cluster. His40 and His70 together coordinate (2E)-4-hydroxy-3-methylbut-2-enyl diphosphate. Residues His40 and His70 each contribute to the dimethylallyl diphosphate site. Residues His40 and His70 each coordinate isopentenyl diphosphate. Residue Cys92 coordinates [4Fe-4S] cluster. His119 serves as a coordination point for (2E)-4-hydroxy-3-methylbut-2-enyl diphosphate. His119 is a binding site for dimethylallyl diphosphate. An isopentenyl diphosphate-binding site is contributed by His119. Catalysis depends on Glu121, which acts as the Proton donor. Residue Thr151 coordinates (2E)-4-hydroxy-3-methylbut-2-enyl diphosphate. Cys181 contributes to the [4Fe-4S] cluster binding site. (2E)-4-hydroxy-3-methylbut-2-enyl diphosphate is bound by residues Ser209, Ser210, Asn211, and Ser251. 4 residues coordinate dimethylallyl diphosphate: Ser209, Ser210, Asn211, and Ser251. Isopentenyl diphosphate contacts are provided by Ser209, Ser210, Asn211, and Ser251.

Belongs to the IspH family. [4Fe-4S] cluster serves as cofactor.

It carries out the reaction isopentenyl diphosphate + 2 oxidized [2Fe-2S]-[ferredoxin] + H2O = (2E)-4-hydroxy-3-methylbut-2-enyl diphosphate + 2 reduced [2Fe-2S]-[ferredoxin] + 2 H(+). The catalysed reaction is dimethylallyl diphosphate + 2 oxidized [2Fe-2S]-[ferredoxin] + H2O = (2E)-4-hydroxy-3-methylbut-2-enyl diphosphate + 2 reduced [2Fe-2S]-[ferredoxin] + 2 H(+). The protein operates within isoprenoid biosynthesis; dimethylallyl diphosphate biosynthesis; dimethylallyl diphosphate from (2E)-4-hydroxy-3-methylbutenyl diphosphate: step 1/1. It participates in isoprenoid biosynthesis; isopentenyl diphosphate biosynthesis via DXP pathway; isopentenyl diphosphate from 1-deoxy-D-xylulose 5-phosphate: step 6/6. Its function is as follows. Catalyzes the conversion of 1-hydroxy-2-methyl-2-(E)-butenyl 4-diphosphate (HMBPP) into a mixture of isopentenyl diphosphate (IPP) and dimethylallyl diphosphate (DMAPP). Acts in the terminal step of the DOXP/MEP pathway for isoprenoid precursor biosynthesis. The sequence is that of 4-hydroxy-3-methylbut-2-enyl diphosphate reductase from Thermotoga petrophila (strain ATCC BAA-488 / DSM 13995 / JCM 10881 / RKU-1).